A 352-amino-acid chain; its full sequence is DNA-directed RNA polymerase subunit alpha (352 aa).

The alpha N-terminal domain (alpha-NTD) stretch occupies residues 1 to 226 (MLISQRPTLT…ELFGLARELN (226 aa)). The interval 243-352 (HIASFGLPIE…EQDYAETEQL (110 aa)) is alpha C-terminal domain (alpha-CTD). The tract at residues 324–352 (DASTGTWSDSGTFSDNDGGEQDYAETEQL) is disordered. The segment covering 326 to 338 (STGTWSDSGTFSD) has biased composition (polar residues). Residues 340 to 352 (DGGEQDYAETEQL) are compositionally biased toward acidic residues.

It belongs to the RNA polymerase alpha chain family. Homodimer. The RNAP catalytic core consists of 2 alpha, 1 beta, 1 beta' and 1 omega subunit. When a sigma factor is associated with the core the holoenzyme is formed, which can initiate transcription.

It carries out the reaction RNA(n) + a ribonucleoside 5'-triphosphate = RNA(n+1) + diphosphate. Its function is as follows. DNA-dependent RNA polymerase catalyzes the transcription of DNA into RNA using the four ribonucleoside triphosphates as substrates. The protein is DNA-directed RNA polymerase subunit alpha of Nocardia farcinica (strain IFM 10152).